A 312-amino-acid polypeptide reads, in one-letter code: Olfactory receptor 10P22 (312 aa).

The Extracellular portion of the chain corresponds to 1–26 (MGDDNDTDITEFILLGFSGYGFLQGH). The N-linked (GlcNAc...) asparagine glycan is linked to Asn5. The helical transmembrane segment at 27–47 (LFWGVLCIYVVTLLGNSLIVL) threads the bilayer. The Cytoplasmic segment spans residues 48-57 (LTLADSALHS). Residues 58–78 (PMYFFLRHFSVVEILYTTTIV) form a helical membrane-spanning segment. The Extracellular segment spans residues 79-89 (PRMLADLRSSC). A helical transmembrane segment spans residues 90–110 (PTIPLASCFTQLYFFALFGIA). At 111 to 143 (ECCLLTAMAYDRYAAICCPLHYTTLMSQGTYTG) the chain is on the cytoplasmic side. The chain crosses the membrane as a helical span at residues 144–164 (LVGASYLAGVISGTTHSIFIF). The Extracellular segment spans residues 165–205 (TLPFRGAKTIHHFLCDILPVLRLATASTFWGEVGNLFVTIT). Residues 206-226 (FIFVPFLLIVASYACILVTIL) form a helical membrane-spanning segment. The Cytoplasmic portion of the chain corresponds to 227 to 236 (GVATSQGRQK). A helical transmembrane segment spans residues 237–257 (LFSTCSSHLFVVILFFGTATV). Over 258-271 (AYMRPQADSFGNTD) the chain is Extracellular. Residues 272-292 (QILTLVYTVVTPMCNPFVYSL) traverse the membrane as a helical segment. Over 293–312 (RNKEVTGAMRRLMKRYLWGP) the chain is Cytoplasmic.

The protein belongs to the G-protein coupled receptor 1 family.

It is found in the cell membrane. Functionally, odorant receptor. This is Olfactory receptor 10P22 from Mus musculus (Mouse).